Here is a 267-residue protein sequence, read N- to C-terminus: Apolipoprotein A-I (267 aa).

A signal peptide spans 1–18 (MKAAVLTLAVLFLTGSQA). A run of 2 repeats spans residues 68–89 (LKLLDNWDSMTSTFSKLREQLG) and 90–111 (PVTQEFWDNLEKETEGLRQEMS). Residues 68–267 (LKLLDNWDSM…EEYTKKLNTQ (200 aa)) form a 10 X approximate tandem repeats region. At Met-110 the chain carries Methionine sulfoxide. One copy of the 3; half-length repeat lies at 112-122 (KDLEEVKAKVQ). A run of 5 repeats spans residues 123 to 144 (PYLDDFQKKWQEEMELYRQKVE), 145 to 166 (PLRAELQEGARQKLHELHEKLS), 167 to 188 (PLGEEMRDRARAHVDALRTHLA), 189 to 210 (PYTDELRQRLAARLEALKENGG), and 211 to 232 (ARLAEYHAKASEHLSTLSEKAK). Met-136 carries the methionine sulfoxide modification. One copy of the 9; half-length repeat lies at 233–243 (PALEDLRQGLL). Copy 10 of the repeat occupies 244–267 (PVLESFKVSFLSALEEYTKKLNTQ).

It belongs to the apolipoprotein A1/A4/E family. Homodimer. Interacts with APOA1BP and CLU. Component of a sperm activating protein complex (SPAP), consisting of APOA1, an immunoglobulin heavy chain, an immunoglobulin light chain and albumin. Interacts with NDRG1. Interacts with SCGB3A2. Interacts with NAXE and YJEFN3. Post-translationally, glycosylated. In terms of processing, palmitoylated. In terms of tissue distribution, major protein of plasma HDL, also found in chylomicrons.

The protein resides in the secreted. Functionally, participates in the reverse transport of cholesterol from tissues to the liver for excretion by promoting cholesterol efflux from tissues and by acting as a cofactor for the lecithin cholesterol acyltransferase (LCAT). As part of the SPAP complex, activates spermatozoa motility. This Pongo abelii (Sumatran orangutan) protein is Apolipoprotein A-I (APOA1).